We begin with the raw amino-acid sequence, 241 residues long: Zinc finger CCHC domain-containing protein 17 (241 aa).

An S1 motif domain is found at 16–88 (YTIFQGEVAM…DRIKVSLSMK (73 aa)). Ser-114 is modified (phosphoserine). The CCHC-type zinc finger occupies 131–148 (TTCKKCGCKGHFAKDCFM). Lys-144 carries the post-translational modification N6-acetyllysine. Residues 161-241 (EEEEKEEAKS…KKKHKKKHKE (81 aa)) form a disordered region. Residues 166–178 (EEAKSAEFEKPDP) are compositionally biased toward basic and acidic residues. Over residues 182-198 (PSRKRKKEKKKKKHRDR) the composition is skewed to basic residues. Ser-183 is subject to Phosphoserine. Basic and acidic residues predominate over residues 211 to 225 (DTGKRARHTSKDSKA). The segment covering 226-241 (AKKKKKKKKHKKKHKE) has biased composition (basic residues).

In terms of assembly, interacts with PNN. Associates with the 60S ribosomal subunit.

The protein localises to the nucleus. It is found in the nucleolus. The sequence is that of Zinc finger CCHC domain-containing protein 17 (ZCCHC17) from Homo sapiens (Human).